Reading from the N-terminus, the 490-residue chain is GTPase Der (490 aa).

2 EngA-type G domains span residues 3–166 (PVVA…MDDV) and 203–376 (IKLA…DSST). Residues 9-16 (GRPNVGKS), 56-60 (DTGGI), 118-121 (NKTD), 209-216 (GRPNVGKS), 256-260 (DTAGV), and 321-324 (NKWD) each bind GTP. Residues 377 to 461 (RRVSTAMLTR…PIRIQFKEGE (85 aa)) enclose the KH-like domain.

The protein belongs to the TRAFAC class TrmE-Era-EngA-EngB-Septin-like GTPase superfamily. EngA (Der) GTPase family. In terms of assembly, associates with the 50S ribosomal subunit.

GTPase that plays an essential role in the late steps of ribosome biogenesis. This chain is GTPase Der, found in Citrobacter koseri (strain ATCC BAA-895 / CDC 4225-83 / SGSC4696).